The chain runs to 347 residues: Aurora kinase A- and ninein-interacting protein (347 aa).

The interval 182–347 is interaction with AURKA; the sequence is QREAKRKREG…DSEGNRVIRH (166 aa). Positions 273–347 are interaction with RBBP8/CtIP; sequence RDSWSQLFTE…DSEGNRVIRH (75 aa). S284 carries the phosphoserine modification. Residues 301–322 show a composition bias toward polar residues; the sequence is VTNARNQGSGQFPDSPQAQGQD. Residues 301 to 325 form a disordered region; the sequence is VTNARNQGSGQFPDSPQAQGQDGPT.

The protein belongs to the AUNIP family. In terms of assembly, interacts (via C-terminus) with AURKA (via C-terminus). Interacts (via N-terminus) with NIN; this interaction blocks NIN phosphorylation by both AURKA and GSK3B. Identified in a complex with NIN and AURKA. Interacts with RBBP8/CtIP.

It is found in the nucleus. It localises to the chromosome. The protein resides in the cytoplasm. The protein localises to the cytoskeleton. Its subcellular location is the microtubule organizing center. It is found in the centrosome. It localises to the spindle pole. Functionally, DNA-binding protein that accumulates at DNA double-strand breaks (DSBs) following DNA damage and promotes DNA resection and homologous recombination. Serves as a sensor of DNA damage: binds DNA with a strong preference for DNA substrates that mimic structures generated at stalled replication forks, and anchors RBBP8/CtIP to DSB sites to promote DNA end resection and ensuing homologous recombination repair. Inhibits non-homologous end joining (NHEJ). Required for the dynamic movement of AURKA at the centrosomes and spindle apparatus during the cell cycle. In Rattus norvegicus (Rat), this protein is Aurora kinase A- and ninein-interacting protein.